We begin with the raw amino-acid sequence, 237 residues long: Purine nucleoside phosphorylase DeoD-type (237 aa).

Position 4 (histidine 4) interacts with a purine D-ribonucleoside. Phosphate-binding positions include glycine 20, arginine 24, arginine 43, and 87–90 (RVGT). Residues 179–181 (EME) and 203–204 (SD) contribute to the a purine D-ribonucleoside site. Residue aspartate 204 is the Proton donor of the active site.

This sequence belongs to the PNP/UDP phosphorylase family. In terms of assembly, homohexamer; trimer of homodimers.

The catalysed reaction is a purine D-ribonucleoside + phosphate = a purine nucleobase + alpha-D-ribose 1-phosphate. It catalyses the reaction a purine 2'-deoxy-D-ribonucleoside + phosphate = a purine nucleobase + 2-deoxy-alpha-D-ribose 1-phosphate. Its function is as follows. Catalyzes the reversible phosphorolytic breakdown of the N-glycosidic bond in the beta-(deoxy)ribonucleoside molecules, with the formation of the corresponding free purine bases and pentose-1-phosphate. The sequence is that of Purine nucleoside phosphorylase DeoD-type from Streptococcus uberis (strain ATCC BAA-854 / 0140J).